Here is a 646-residue protein sequence, read N- to C-terminus: Lipoteichoic acid synthase (646 aa).

The Cytoplasmic segment spans residues 1–7 (MKLHKKK). Residues 8 to 28 (LTLFAFFILTVLTVTLKTYFS) form a helical membrane-spanning segment. At 29–43 (YYVDFSLGVKGLVQN) the chain is on the extracellular side. Residues 44–64 (LILLMNPYSLIALVLSIFLFF) traverse the membrane as a helical segment. Residues 65–68 (KGKK) are Cytoplasmic-facing. Residues 69–89 (AFWFIFIGGFILTFLLYANVV) traverse the membrane as a helical segment. Topologically, residues 90-119 (YFRFFSDFLTFSTLNQAGNVESMGGAVTAS) are extracellular. A helical membrane pass occupies residues 120 to 140 (FKWYDFVYFIDTIIYLFVLIF). Over 141–153 (KQKWLDKRVFSKK) the chain is Cytoplasmic. A helical membrane pass occupies residues 154 to 174 (FVPVVMAASIALFFLNLAFAE). Residues 175 to 646 (SDRPELLTRT…KTGPKGQERK (472 aa)) lie on the Extracellular side of the membrane. Residues Glu-255 and Thr-300 each coordinate Mn(2+). Thr-300 is a catalytic residue. His-416 contributes to the substrate binding site. Mn(2+)-binding residues include Asp-475 and His-476. The interval 579-646 (IYDNKNNEPM…KTGPKGQERK (68 aa)) is disordered. Composition is skewed to basic and acidic residues over residues 580–607 (YDNKNNEPMTEKPKDFEKRKQQSEKDLQ) and 625–646 (DFDKIKPSEYEYKTGPKGQERK).

This sequence belongs to the LTA synthase family. Proteolytically cleaved.

Its subcellular location is the cell membrane. It localises to the secreted. Its pathway is cell wall biogenesis; lipoteichoic acid biosynthesis. Catalyzes the polymerization of lipoteichoic acid (LTA) polyglycerol phosphate, a reaction that presumably uses phosphatidylglycerol (PG) as substrate. Is required for staphylococcal growth and cell division process. The chain is Lipoteichoic acid synthase (ltaS) from Staphylococcus saprophyticus subsp. saprophyticus (strain ATCC 15305 / DSM 20229 / NCIMB 8711 / NCTC 7292 / S-41).